Here is a 538-residue protein sequence, read N- to C-terminus: Beta-1,4-mannosyl-glycoprotein 4-beta-N-acetylglucosaminyltransferase (538 aa).

Residues 1–7 lie on the Cytoplasmic side of the membrane; sequence MKMRRYK. The chain crosses the membrane as a helical; Signal-anchor for type II membrane protein span at residues 8 to 23; sequence LFLMFCMAGLCLISFL. Residues 24-538 are Lumenal-facing; sequence HFFKTLSYVT…VRGKLDTTEG (515 aa). A disordered region spans residues 121–151; it reads GTRMLEKPSPGRTEEKTKVAEGSSVRGPARR. Residues asparagine 245, asparagine 263, and asparagine 401 are each glycosylated (N-linked (GlcNAc...) asparagine). The tract at residues 509-538 is disordered; the sequence is PKSTVEGGRRNQGSDGRSSAVRGKLDTTEG.

It belongs to the glycosyltransferase 17 family. In terms of assembly, interacts with MGAT4D.

It localises to the golgi apparatus membrane. The enzyme catalyses N(4)-{beta-D-GlcNAc-(1-&gt;2)-alpha-D-Man-(1-&gt;3)-[beta-D-GlcNAc-(1-&gt;2)-alpha-D-Man-(1-&gt;6)]-beta-D-Man-(1-&gt;4)-beta-D-GlcNAc-(1-&gt;4)-beta-D-GlcNAc}-L-asparaginyl-[protein] + UDP-N-acetyl-alpha-D-glucosamine = N(4)-{beta-D-GlcNAc-(1-&gt;2)-alpha-D-Man-(1-&gt;3)-[beta-D-GlcNAc-(1-&gt;4)]-[beta-D-GlcNAc-(1-&gt;2)-alpha-D-Man-(1-&gt;6)]-beta-D-Man-(1-&gt;4)-beta-D-GlcNAc-(1-&gt;4)-beta-D-GlcNAc}-L-asparaginyl-[protein] + UDP + H(+). It functions in the pathway protein modification; protein glycosylation. In terms of biological role, it is involved in the regulation of the biosynthesis and biological function of glycoprotein oligosaccharides. Catalyzes the addition of N-acetylglucosamine in beta 1-4 linkage to the beta-linked mannose of the trimannosyl core of N-linked sugar chains, called bisecting N-acetylglucosamine (GlcNAc). It is one of the most important enzymes involved in the regulation of the biosynthesis of glycoprotein oligosaccharides. The addition of this bisecting GlcNAc residue alters not only the composition, but also the conformation of the N-glycan. The introduction of the bisecting GlcNAc residue results in the suppression of further processing and elongation of N-glycans, precluding the formation of beta-1,6 GlcNAc branching, catalyzed by MGAT5 since it is unable to use the bisected oligosaccharide as a substrate. Addition of bisecting N-acetylglucosamine to CDH1/E-cadherin modulates CDH1 cell membrane location. Inhibits NeuAc-alpha-2,3-Gal-beta-1,4-GlcNAc- formation which modulates sialylation levels and plays a role in cell migration regulation. In brain, addition of bisecting N-acetylglucosamine to BACE1 blocks its lysosomal targeting in response to oxidative stress and further degradation which increases its location to early endosome and the APP cleavage. This is Beta-1,4-mannosyl-glycoprotein 4-beta-N-acetylglucosaminyltransferase (Mgat3) from Rattus norvegicus (Rat).